The following is a 522-amino-acid chain: Glycogen synthase (522 aa).

The interval 1-29 (MISAVLDTQGDHPQQQAGDRAAPSVPVPG) is disordered. An ADP-alpha-D-glucose-binding site is contributed by lysine 58.

This sequence belongs to the glycosyltransferase 1 family. Bacterial/plant glycogen synthase subfamily.

The enzyme catalyses [(1-&gt;4)-alpha-D-glucosyl](n) + ADP-alpha-D-glucose = [(1-&gt;4)-alpha-D-glucosyl](n+1) + ADP + H(+). Its pathway is glycan biosynthesis; glycogen biosynthesis. In terms of biological role, synthesizes alpha-1,4-glucan chains using ADP-glucose. This chain is Glycogen synthase, found in Pseudomonas fluorescens (strain ATCC BAA-477 / NRRL B-23932 / Pf-5).